The primary structure comprises 321 residues: uncharacterized protein (321 aa).

In terms of domain architecture, Exonuclease spans 130 to 314 (NLVYDLETTG…NDVDALIKIM (185 aa)).

This is an uncharacterized protein from Acanthamoeba polyphaga (Amoeba).